A 1503-amino-acid chain; its full sequence is Lysine-specific demethylase 5B-B (1503 aa).

Residues 15-56 (CPVFEPSWEEFKDPFAFINKIRPIAEKTGICKVRPPPDWQPP) form the JmjN domain. In terms of domain architecture, ARID spans 80–170 (TRVKLNFLDQ…ILYPYNLFQS (91 aa)). The span at 202–211 (VPLQPSNTSA) shows a compositional bias: polar residues. Disordered stretches follow at residues 202–223 (VPLQ…KTES) and 268–287 (IKEL…NIPP). The segment covering 268–278 (IKELNPEPEKS) has biased composition (basic and acidic residues). The PHD-type 1 zinc finger occupies 295-345 (LYVCLVCGKGNDEDRLLLCDGCDDSYHTFCLIPPLTDVPKGDWRCPKCLTQ). Residues 439-605 (KYLQCGWNLN…LGRQCVDHYR (167 aa)) form the JmjC domain. 3 residues coordinate Fe cation: H485, D488, and H573. Residues 1168–1216 (LKVCVCQKPAMGAMLQCELCRDAFHSVCVRGPSDPLDPEAWLCPLCLRS) form a PHD-type 2 zinc finger. Disordered regions lie at residues 1362–1381 (TNTS…TETD) and 1403–1442 (ERGT…DSEE). Residues 1444-1497 (MTLCPAESCLQPEGEEVDWVQCDCCNRWFHMICVGVSAELAAEEDYMCVSCSTS) form a PHD-type 3 zinc finger.

The protein belongs to the JARID1 histone demethylase family. Fe(2+) is required as a cofactor.

The protein resides in the nucleus. The enzyme catalyses N(6),N(6),N(6)-trimethyl-L-lysyl(4)-[histone H3] + 3 2-oxoglutarate + 3 O2 = L-lysyl(4)-[histone H3] + 3 formaldehyde + 3 succinate + 3 CO2. Its function is as follows. Histone demethylase that demethylates 'Lys-4' of histone H3, thereby playing a central role in histone code. Does not demethylate histone H3 'Lys-9' or H3 'Lys-27'. Demethylates trimethylated, dimethylated and monomethylated H3 'Lys-4'. Acts as a transcriptional corepressor. This is Lysine-specific demethylase 5B-B (kdm5bb) from Danio rerio (Zebrafish).